Here is a 187-residue protein sequence, read N- to C-terminus: UPF0301 protein HSM_1900 (187 aa).

Belongs to the UPF0301 (AlgH) family.

The sequence is that of UPF0301 protein HSM_1900 from Histophilus somni (strain 2336) (Haemophilus somnus).